Reading from the N-terminus, the 669-residue chain is Protein adenylyltransferase SelO, mitochondrial (669 aa).

A mitochondrion-targeting transit peptide spans 1 to 115 (MAVYRAALGA…LGLGAPPARE (115 aa)). Gly153, Gly155, Lys176, Asp188, Gly189, Arg246, and Arg253 together coordinate ATP. Asp338 serves as the catalytic Proton acceptor. Mg(2+)-binding residues include Asn339 and Asp348. Asp348 is an ATP binding site. Residues 634 to 654 (ATDAEATEADGADGRQRSYSS) are disordered. Residue Thr635 is modified to Phosphothreonine. Ser653 carries the post-translational modification Phosphoserine. Residue Sec667 is a non-standard amino acid, selenocysteine.

The protein belongs to the SELO family. It depends on Mg(2+) as a cofactor.

Its subcellular location is the mitochondrion. It catalyses the reaction L-tyrosyl-[protein] + ATP = O-(5'-adenylyl)-L-tyrosyl-[protein] + diphosphate. The enzyme catalyses L-threonyl-[protein] + ATP = 3-O-(5'-adenylyl)-L-threonyl-[protein] + diphosphate. It carries out the reaction L-seryl-[protein] + ATP = 3-O-(5'-adenylyl)-L-seryl-[protein] + diphosphate. Its function is as follows. Catalyzes the transfer of adenosine 5'-monophosphate (AMP) to Ser, Thr and Tyr residues of target proteins (AMPylation). May be a redox-active mitochondrial selenoprotein which interacts with a redox target protein. The protein is Protein adenylyltransferase SelO, mitochondrial of Homo sapiens (Human).